The primary structure comprises 299 residues: UPF0282 protein TK1681 (299 aa).

Belongs to the UPF0282 family.

In Thermococcus kodakarensis (strain ATCC BAA-918 / JCM 12380 / KOD1) (Pyrococcus kodakaraensis (strain KOD1)), this protein is UPF0282 protein TK1681.